The sequence spans 336 residues: GTPase Obg (336 aa).

An Obg domain is found at Met-1 to Leu-159. The OBG-type G domain maps to Ala-160 to Asn-333. Residues Gly-166 to Ser-173, Phe-191 to Val-195, Asp-213 to Gly-216, Asn-283 to Asp-286, and Ser-314 to Met-316 each bind GTP. Mg(2+) is bound by residues Ser-173 and Thr-193.

The protein belongs to the TRAFAC class OBG-HflX-like GTPase superfamily. OBG GTPase family. Monomer. Mg(2+) is required as a cofactor.

Its subcellular location is the cytoplasm. In terms of biological role, an essential GTPase which binds GTP, GDP and possibly (p)ppGpp with moderate affinity, with high nucleotide exchange rates and a fairly low GTP hydrolysis rate. Plays a role in control of the cell cycle, stress response, ribosome biogenesis and in those bacteria that undergo differentiation, in morphogenesis control. The chain is GTPase Obg from Baumannia cicadellinicola subsp. Homalodisca coagulata.